The primary structure comprises 258 residues: Imidazole glycerol phosphate synthase subunit HisF (258 aa).

Residues Asp11 and Asp130 contribute to the active site.

It belongs to the HisA/HisF family. As to quaternary structure, heterodimer of HisH and HisF.

It localises to the cytoplasm. The enzyme catalyses 5-[(5-phospho-1-deoxy-D-ribulos-1-ylimino)methylamino]-1-(5-phospho-beta-D-ribosyl)imidazole-4-carboxamide + L-glutamine = D-erythro-1-(imidazol-4-yl)glycerol 3-phosphate + 5-amino-1-(5-phospho-beta-D-ribosyl)imidazole-4-carboxamide + L-glutamate + H(+). The protein operates within amino-acid biosynthesis; L-histidine biosynthesis; L-histidine from 5-phospho-alpha-D-ribose 1-diphosphate: step 5/9. Its function is as follows. IGPS catalyzes the conversion of PRFAR and glutamine to IGP, AICAR and glutamate. The HisF subunit catalyzes the cyclization activity that produces IGP and AICAR from PRFAR using the ammonia provided by the HisH subunit. The chain is Imidazole glycerol phosphate synthase subunit HisF from Methylobacterium sp. (strain 4-46).